A 513-amino-acid polypeptide reads, in one-letter code: Glycine/sarcosine/betaine reductase complex component C subunit beta (513 aa).

In terms of assembly, heterooctamer of four alpha and four beta subunits. Component of the glycine, sarcosine and betaine reductase complexes, together with proteins A and B.

The enzyme catalyses acetyl phosphate + [thioredoxin]-disulfide + NH4(+) + H2O = [thioredoxin]-dithiol + glycine + phosphate + H(+). It carries out the reaction acetyl phosphate + methylamine + [thioredoxin]-disulfide + H2O = sarcosine + [thioredoxin]-dithiol + phosphate + H(+). The catalysed reaction is acetyl phosphate + trimethylamine + [thioredoxin]-disulfide + H2O = glycine betaine + [thioredoxin]-dithiol + phosphate + H(+). In terms of biological role, in the first step of glycine, betaine and sarcosine reductases, the substrate is bound to component PB via a Schiff base intermediate. Then the PB-activated substrate is nucleophilically attacked by the selenol anion of component PA to transform it to a carboxymethylated selenoether and the respective amine. By action of component PC, acetyl phosphate is formed, leaving component PA in its oxidized state. Finally component PA becomes reduced by the thioredoxin system to start a new catalytic cycle of reductive deamination. The chain is Glycine/sarcosine/betaine reductase complex component C subunit beta (grdC) from Peptoclostridium acidaminophilum (Eubacterium acidaminophilum).